A 167-amino-acid chain; its full sequence is Thioredoxin-like protein HI_1115 (167 aa).

A helical membrane pass occupies residues 10 to 27 (GLSLFLTFIVITSILDFV). The Thioredoxin domain occupies 30–167 (PVVPEEINKI…VRLFFAEFFG (138 aa)). Cys69 and Cys72 are disulfide-bonded.

The protein belongs to the thioredoxin family.

It localises to the cell membrane. The polypeptide is Thioredoxin-like protein HI_1115 (Haemophilus influenzae (strain ATCC 51907 / DSM 11121 / KW20 / Rd)).